We begin with the raw amino-acid sequence, 211 residues long: Small ribosomal subunit protein uS3 (211 aa).

Residues 38-106 (LRSFVKKTFH…DVELHIVEVK (69 aa)) enclose the KH type-2 domain.

Belongs to the universal ribosomal protein uS3 family. As to quaternary structure, part of the 30S ribosomal subunit. Forms a tight complex with proteins S10 and S14.

Functionally, binds the lower part of the 30S subunit head. Binds mRNA in the 70S ribosome, positioning it for translation. This chain is Small ribosomal subunit protein uS3, found in Anaplasma marginale (strain Florida).